The following is a 341-amino-acid chain: UDP-3-O-acylglucosamine N-acyltransferase (341 aa).

The active-site Proton acceptor is the His-239.

The protein belongs to the transferase hexapeptide repeat family. LpxD subfamily. As to quaternary structure, homotrimer.

It catalyses the reaction a UDP-3-O-[(3R)-3-hydroxyacyl]-alpha-D-glucosamine + a (3R)-hydroxyacyl-[ACP] = a UDP-2-N,3-O-bis[(3R)-3-hydroxyacyl]-alpha-D-glucosamine + holo-[ACP] + H(+). The protein operates within bacterial outer membrane biogenesis; LPS lipid A biosynthesis. Functionally, catalyzes the N-acylation of UDP-3-O-acylglucosamine using 3-hydroxyacyl-ACP as the acyl donor. Is involved in the biosynthesis of lipid A, a phosphorylated glycolipid that anchors the lipopolysaccharide to the outer membrane of the cell. This is UDP-3-O-acylglucosamine N-acyltransferase from Shewanella oneidensis (strain ATCC 700550 / JCM 31522 / CIP 106686 / LMG 19005 / NCIMB 14063 / MR-1).